The sequence spans 566 residues: Proline--tRNA ligase (566 aa).

This sequence belongs to the class-II aminoacyl-tRNA synthetase family. ProS type 1 subfamily. Homodimer.

The protein localises to the cytoplasm. The catalysed reaction is tRNA(Pro) + L-proline + ATP = L-prolyl-tRNA(Pro) + AMP + diphosphate. Its function is as follows. Catalyzes the attachment of proline to tRNA(Pro) in a two-step reaction: proline is first activated by ATP to form Pro-AMP and then transferred to the acceptor end of tRNA(Pro). As ProRS can inadvertently accommodate and process non-cognate amino acids such as alanine and cysteine, to avoid such errors it has two additional distinct editing activities against alanine. One activity is designated as 'pretransfer' editing and involves the tRNA(Pro)-independent hydrolysis of activated Ala-AMP. The other activity is designated 'posttransfer' editing and involves deacylation of mischarged Ala-tRNA(Pro). The misacylated Cys-tRNA(Pro) is not edited by ProRS. The polypeptide is Proline--tRNA ligase (Bacillus cereus (strain AH187)).